A 271-amino-acid polypeptide reads, in one-letter code: 3-methyl-2-oxobutanoate hydroxymethyltransferase (271 aa).

Mg(2+) is bound by residues D51 and D90. 3-methyl-2-oxobutanoate contacts are provided by residues 51–52 (DS), D90, and K119. A Mg(2+)-binding site is contributed by E121. E188 (proton acceptor) is an active-site residue.

The protein belongs to the PanB family. In terms of assembly, homodecamer; pentamer of dimers. It depends on Mg(2+) as a cofactor.

It is found in the cytoplasm. The enzyme catalyses 3-methyl-2-oxobutanoate + (6R)-5,10-methylene-5,6,7,8-tetrahydrofolate + H2O = 2-dehydropantoate + (6S)-5,6,7,8-tetrahydrofolate. Its pathway is cofactor biosynthesis; (R)-pantothenate biosynthesis; (R)-pantoate from 3-methyl-2-oxobutanoate: step 1/2. Its function is as follows. Catalyzes the reversible reaction in which hydroxymethyl group from 5,10-methylenetetrahydrofolate is transferred onto alpha-ketoisovalerate to form ketopantoate. The polypeptide is 3-methyl-2-oxobutanoate hydroxymethyltransferase (Azoarcus sp. (strain BH72)).